We begin with the raw amino-acid sequence, 168 residues long: Gremlin-2 (168 aa).

A signal peptide spans 1–21 (MFWKLSLTLLLVAVLVKVAET). Asn-40 carries N-linked (GlcNAc...) asparagine glycosylation. Intrachain disulfides connect Cys-73–Cys-123, Cys-87–Cys-137, Cys-97–Cys-155, and Cys-101–Cys-157. One can recognise a CTCK domain in the interval 73–163 (CKTQPLRQTV…HCRCMSVNLS (91 aa)). Asn-161 carries an N-linked (GlcNAc...) asparagine glycan.

The protein belongs to the DAN family. As to quaternary structure, homodimer. Interacts with BMP2, BMP4 and BMP7, but has lower affinity for BMP7 than for BMP2 and BMP4. Binds heparin; this impairs the interaction with BMP2. N-glycosylated. In terms of tissue distribution, highly expressed in the ovary, followed by brain, spleen, colon, kidney and uterus. In ovary expressed in granulosa cells of selective early antral follicles.

Its subcellular location is the secreted. In terms of biological role, cytokine that inhibits the activity of BMP2 and BMP4 in a dose-dependent manner, and thereby modulates signaling by BMP family members. Contributes to the regulation of embryonic morphogenesis via BMP family members. Antagonizes BMP4-induced suppression of progesterone production in granulosa cells. The sequence is that of Gremlin-2 (Grem2) from Mus musculus (Mouse).